A 323-amino-acid chain; its full sequence is Olfactory receptor 52B2 (323 aa).

Residues 1–27 (MSHTNVTIFHPAVFVLPGIPGLEAYHI) are Extracellular-facing. N-linked (GlcNAc...) asparagine glycosylation is present at Asn5. Residues 28–48 (WLSIPLCLIYITAVLGNSILI) form a helical membrane-spanning segment. At 49–56 (VVIVMERN) the chain is on the cytoplasmic side. A helical transmembrane segment spans residues 57–77 (LHVPMYFFLSMLAVMDILLST). Topologically, residues 78 to 101 (TTVPKALAIFWLQAHNIAFDACVT) are extracellular. An intrachain disulfide couples Cys99 to Cys191. The helical transmembrane segment at 102 to 122 (QGFFVHMMFVGESAILLAMAF) threads the bilayer. The Cytoplasmic portion of the chain corresponds to 123–141 (DRFVAICAPLRYTTVLTWP). A helical membrane pass occupies residues 142-162 (VVGRIALAVITRSFCIIFPVI). Topologically, residues 163–198 (FLLKRLPFCLTNIVPHSYCEHIGVARLACADITVNI) are extracellular. Residues 199-219 (WYGFSVPIVMVILDVILIAVS) traverse the membrane as a helical segment. The Cytoplasmic portion of the chain corresponds to 220-239 (YSLILRAVFRLPSQDARHKA). Residues 240-260 (LSTCGSHLCVILMFYVPSFFT) traverse the membrane as a helical segment. Residues 261-275 (LLTHHFGRNIPQHVH) lie on the Extracellular side of the membrane. A helical membrane pass occupies residues 276-296 (ILLANLYVAVPPMLNPIVYGV). Residues 297-323 (KTKQIREGVAHRFFDIKTWCCTSPLGS) are Cytoplasmic-facing.

Belongs to the G-protein coupled receptor 1 family.

It is found in the cell membrane. Odorant receptor. In Homo sapiens (Human), this protein is Olfactory receptor 52B2 (OR52B2).